We begin with the raw amino-acid sequence, 646 residues long: Threonine--tRNA ligase (646 aa).

One can recognise a TGS domain in the interval 1-61 (MIKITFPDGN…NEDSNFEIVT (61 aa)). The segment at 242 to 540 (DHRKLGRELD…LIEVYKGAFP (299 aa)) is catalytic. Zn(2+) is bound by residues C336, H387, and H517.

Belongs to the class-II aminoacyl-tRNA synthetase family. Homodimer. The cofactor is Zn(2+).

The protein resides in the cytoplasm. The catalysed reaction is tRNA(Thr) + L-threonine + ATP = L-threonyl-tRNA(Thr) + AMP + diphosphate + H(+). Its function is as follows. Catalyzes the attachment of threonine to tRNA(Thr) in a two-step reaction: L-threonine is first activated by ATP to form Thr-AMP and then transferred to the acceptor end of tRNA(Thr). Also edits incorrectly charged L-seryl-tRNA(Thr). In Lactococcus lactis subsp. lactis (strain IL1403) (Streptococcus lactis), this protein is Threonine--tRNA ligase.